Here is a 446-residue protein sequence, read N- to C-terminus: GTPase Der (446 aa).

EngA-type G domains are found at residues Pro3–Gln168 and Ile181–Met354. GTP contacts are provided by residues Gly9–Ser16, Asp57–Phe61, Asn120–Glu123, Gly187–Ser194, Asp234–Leu238, and Asn299–Asp302. The KH-like domain maps to Ser355–Thr439.

It belongs to the TRAFAC class TrmE-Era-EngA-EngB-Septin-like GTPase superfamily. EngA (Der) GTPase family. As to quaternary structure, associates with the 50S ribosomal subunit.

Its function is as follows. GTPase that plays an essential role in the late steps of ribosome biogenesis. The protein is GTPase Der of Paraburkholderia phymatum (strain DSM 17167 / CIP 108236 / LMG 21445 / STM815) (Burkholderia phymatum).